Consider the following 257-residue polypeptide: Imidazole glycerol phosphate synthase subunit HisF (257 aa).

Residues Asp-11 and Asp-130 contribute to the active site.

Belongs to the HisA/HisF family. As to quaternary structure, heterodimer of HisH and HisF.

The protein resides in the cytoplasm. The catalysed reaction is 5-[(5-phospho-1-deoxy-D-ribulos-1-ylimino)methylamino]-1-(5-phospho-beta-D-ribosyl)imidazole-4-carboxamide + L-glutamine = D-erythro-1-(imidazol-4-yl)glycerol 3-phosphate + 5-amino-1-(5-phospho-beta-D-ribosyl)imidazole-4-carboxamide + L-glutamate + H(+). It functions in the pathway amino-acid biosynthesis; L-histidine biosynthesis; L-histidine from 5-phospho-alpha-D-ribose 1-diphosphate: step 5/9. IGPS catalyzes the conversion of PRFAR and glutamine to IGP, AICAR and glutamate. The HisF subunit catalyzes the cyclization activity that produces IGP and AICAR from PRFAR using the ammonia provided by the HisH subunit. This is Imidazole glycerol phosphate synthase subunit HisF from Shewanella sp. (strain W3-18-1).